Here is a 655-residue protein sequence, read N- to C-terminus: tRNA-guanine(15) transglycosylase (655 aa).

Catalysis depends on Asp89, which acts as the Nucleophile. 2 residues coordinate substrate: Asp124 and Ala195. Zn(2+) contacts are provided by Cys281, Cys283, and Cys286. The 76-residue stretch at Lys577–Lys652 folds into the PUA domain.

It belongs to the archaeosine tRNA-ribosyltransferase family. Zn(2+) serves as cofactor.

The catalysed reaction is guanosine(15) in tRNA + 7-cyano-7-deazaguanine = 7-cyano-7-carbaguanosine(15) in tRNA + guanine. It functions in the pathway tRNA modification; archaeosine-tRNA biosynthesis. Functionally, exchanges the guanine residue with 7-cyano-7-deazaguanine (preQ0) at position 15 in the dihydrouridine loop (D-loop) of archaeal tRNAs. Can also utilize guanine as substrate. The polypeptide is tRNA-guanine(15) transglycosylase (Methanocaldococcus jannaschii (strain ATCC 43067 / DSM 2661 / JAL-1 / JCM 10045 / NBRC 100440) (Methanococcus jannaschii)).